The sequence spans 554 residues: uncharacterized protein (554 aa).

An N-terminal signal peptide occupies residues 1–33; the sequence is MKKILIIILFIIIFIVLIYSGLWFVIMFSLSHS.

This is an uncharacterized protein from Rickettsia prowazekii (strain Madrid E).